The following is a 78-amino-acid chain: MKLTCVLIIAVLFLTAITADDSRDKQVYRAVGLIDKMRRIRASEGCRKKGDRCGTHLCCPGLRCGSGRAGGACRPPYN.

Positions 1-19 (MKLTCVLIIAVLFLTAITA) are cleaved as a signal peptide. Positions 20–41 (DDSRDKQVYRAVGLIDKMRRIR) are excised as a propeptide. Cystine bridges form between C46–C59, C53–C64, and C58–C73.

This sequence belongs to the conotoxin O1 superfamily. As to expression, expressed by the venom duct.

It is found in the secreted. This chain is Conotoxin Bu2, found in Conus bullatus (Bubble cone).